The chain runs to 351 residues: Phosphoribosylformylglycinamidine cyclo-ligase (351 aa).

This sequence belongs to the AIR synthase family.

The protein localises to the cytoplasm. It carries out the reaction 2-formamido-N(1)-(5-O-phospho-beta-D-ribosyl)acetamidine + ATP = 5-amino-1-(5-phospho-beta-D-ribosyl)imidazole + ADP + phosphate + H(+). Its pathway is purine metabolism; IMP biosynthesis via de novo pathway; 5-amino-1-(5-phospho-D-ribosyl)imidazole from N(2)-formyl-N(1)-(5-phospho-D-ribosyl)glycinamide: step 2/2. This Xylella fastidiosa (strain Temecula1 / ATCC 700964) protein is Phosphoribosylformylglycinamidine cyclo-ligase.